The primary structure comprises 248 residues: Aspartate/glutamate leucyltransferase (248 aa).

It belongs to the R-transferase family. Bpt subfamily.

Its subcellular location is the cytoplasm. The enzyme catalyses N-terminal L-glutamyl-[protein] + L-leucyl-tRNA(Leu) = N-terminal L-leucyl-L-glutamyl-[protein] + tRNA(Leu) + H(+). It catalyses the reaction N-terminal L-aspartyl-[protein] + L-leucyl-tRNA(Leu) = N-terminal L-leucyl-L-aspartyl-[protein] + tRNA(Leu) + H(+). Functions in the N-end rule pathway of protein degradation where it conjugates Leu from its aminoacyl-tRNA to the N-termini of proteins containing an N-terminal aspartate or glutamate. In Methylorubrum populi (strain ATCC BAA-705 / NCIMB 13946 / BJ001) (Methylobacterium populi), this protein is Aspartate/glutamate leucyltransferase.